The chain runs to 488 residues: Catalase (488 aa).

The interval 1–24 (MTDRRNLTTNQGVPIGDNQNSMTA) is disordered. Residues 7 to 23 (LTTNQGVPIGDNQNSMT) are compositionally biased toward polar residues. Residues H55 and N128 contribute to the active site. Y338 provides a ligand contact to heme.

It belongs to the catalase family. Requires heme as cofactor.

It is found in the cytoplasm. The catalysed reaction is 2 H2O2 = O2 + 2 H2O. In terms of biological role, decomposes hydrogen peroxide into water and oxygen; serves to protect cells from the toxic effects of hydrogen peroxide. This is Catalase (kat) from Listeria seeligeri.